A 122-amino-acid polypeptide reads, in one-letter code: Large ribosomal subunit protein bL12 (122 aa).

Belongs to the bacterial ribosomal protein bL12 family. As to quaternary structure, homodimer. Part of the ribosomal stalk of the 50S ribosomal subunit. Forms a multimeric L10(L12)X complex, where L10 forms an elongated spine to which 2 to 4 L12 dimers bind in a sequential fashion. Binds GTP-bound translation factors.

Forms part of the ribosomal stalk which helps the ribosome interact with GTP-bound translation factors. Is thus essential for accurate translation. The protein is Large ribosomal subunit protein bL12 of Deinococcus radiodurans (strain ATCC 13939 / DSM 20539 / JCM 16871 / CCUG 27074 / LMG 4051 / NBRC 15346 / NCIMB 9279 / VKM B-1422 / R1).